Here is a 268-residue protein sequence, read N- to C-terminus: MICOS complex subunit MIC27 (268 aa).

A mitochondrion-targeting transit peptide spans 1–27 (MAAIRMGKLTTMPAGLIYASVSVHAAK). Residues 28–110 (QEESKKQLVK…YVYLKNPPRD (83 aa)) are Mitochondrial intermembrane-facing. Residues 111 to 129 (FLPKMGVITVSGLAGLVSA) form a helical membrane-spanning segment. Over 130 to 137 (RKGSKFKK) the chain is Mitochondrial matrix. The helical transmembrane segment at 138–155 (ITYPLGLATLGATVCYPV) threads the bilayer. At 156–268 (QSVIIAKVTA…EDIDMYSTRS (113 aa)) the chain is on the mitochondrial intermembrane side. The span at 187-200 (SKEESLPKPKEKTK) shows a compositional bias: basic and acidic residues. The tract at residues 187–268 (SKEESLPKPK…EDIDMYSTRS (82 aa)) is disordered. Ser204 bears the Phosphoserine mark. The span at 249–260 (KLMDHGQSHPED) shows a compositional bias: basic and acidic residues.

This sequence belongs to the apolipoprotein O/MICOS complex subunit Mic27 family. In terms of assembly, component of the mitochondrial contact site and cristae organizing system (MICOS) complex, composed of at least MICOS10/MIC10, CHCHD3/MIC19, CHCHD6/MIC25, APOOL/MIC27, IMMT/MIC60, APOO/MIC23/MIC26 and MICOS13/MIC13. This complex was also known under the names MINOS or MitOS complex. The MICOS complex associates with mitochondrial outer membrane proteins SAMM50, MTX1 and MTX2 (together described as components of the mitochondrial outer membrane sorting assembly machinery (SAM) complex) and DNAJC11, mitochondrial inner membrane protein TMEM11 and with HSPA9. The MICOS and SAM complexes together with DNAJC11 are part of a large protein complex spanning both membranes termed the mitochondrial intermembrane space bridging (MIB) complex. Interacts with MICOS10/MIC10, IMMT/MIC60 and APOO/MIC23/MIC26.

The protein resides in the mitochondrion inner membrane. It is found in the mitochondrion. Its function is as follows. Component of the MICOS complex, a large protein complex of the mitochondrial inner membrane that plays crucial roles in the maintenance of crista junctions, inner membrane architecture, and formation of contact sites to the outer membrane. Specifically binds to cardiolipin (in vitro) but not to the precursor lipid phosphatidylglycerol. Plays a crucial role in crista junction formation and mitochondrial function,. This chain is MICOS complex subunit MIC27 (APOOL), found in Homo sapiens (Human).